Reading from the N-terminus, the 462-residue chain is L-seryl-tRNA(Sec) selenium transferase (462 aa).

Lys-293 is modified (N6-(pyridoxal phosphate)lysine).

This sequence belongs to the SelA family. Pyridoxal 5'-phosphate serves as cofactor.

It is found in the cytoplasm. The catalysed reaction is L-seryl-tRNA(Sec) + selenophosphate + H(+) = L-selenocysteinyl-tRNA(Sec) + phosphate. It functions in the pathway aminoacyl-tRNA biosynthesis; selenocysteinyl-tRNA(Sec) biosynthesis; selenocysteinyl-tRNA(Sec) from L-seryl-tRNA(Sec) (bacterial route): step 1/1. In terms of biological role, converts seryl-tRNA(Sec) to selenocysteinyl-tRNA(Sec) required for selenoprotein biosynthesis. The protein is L-seryl-tRNA(Sec) selenium transferase of Clostridium botulinum (strain Langeland / NCTC 10281 / Type F).